We begin with the raw amino-acid sequence, 232 residues long: Enolase-phosphatase E1 (232 aa).

The protein belongs to the HAD-like hydrolase superfamily. MasA/MtnC family. Monomer. It depends on Mg(2+) as a cofactor.

The catalysed reaction is 5-methylsulfanyl-2,3-dioxopentyl phosphate + H2O = 1,2-dihydroxy-5-(methylsulfanyl)pent-1-en-3-one + phosphate. It participates in amino-acid biosynthesis; L-methionine biosynthesis via salvage pathway; L-methionine from S-methyl-5-thio-alpha-D-ribose 1-phosphate: step 3/6. It functions in the pathway amino-acid biosynthesis; L-methionine biosynthesis via salvage pathway; L-methionine from S-methyl-5-thio-alpha-D-ribose 1-phosphate: step 4/6. Its function is as follows. Bifunctional enzyme that catalyzes the enolization of 2,3-diketo-5-methylthiopentyl-1-phosphate (DK-MTP-1-P) into the intermediate 2-hydroxy-3-keto-5-methylthiopentenyl-1-phosphate (HK-MTPenyl-1-P), which is then dephosphorylated to form the acireductone 1,2-dihydroxy-3-keto-5-methylthiopentene (DHK-MTPene). In Xylella fastidiosa (strain M12), this protein is Enolase-phosphatase E1.